A 572-amino-acid chain; its full sequence is MPQISRQEYAGLFGPTTGDKIRLGDTNLFIEIEKDLRGYGEESVYGGGKSLRDGMGANNNLTRDNGVLDLVITNVTIVDARLGVIKADVGIRDGKIAGIGKSGNPGVMDGVTQGMVVGVSTDAISGEHLILTAAGIDSHIHLISPQQAYHALSNGVATFFGGGIGPTDGTNGTTVTPGPWNIRQMLRSIEGLPVNVGILGKGNSYGRGPLLEQAIAGVVGYKVHEDWGATANALRHALRMADEVDIQVSVHTDSLNECGYVEDTIDAFEGRTIHTFHTEGAGGGHAPDIIRVASQTNVLPSSTNPTLPYGVNSQAELFDMIMVCHNLNPNVPADVSFAESRVRPETIAAENVLHDMGVISMFSSDSQAMGRVGENWLRILQTADAMKAARGKLPEDAAGNDNFRVLRYVAKITINPAITQGVSHVIGSVEVGKMADLVLWDPRFFGAKPKMVIKGGMINWAAMGDPNASLPTPQPVFYRPMFGAMGKTLQDTCVTFVSQAALDDGVKEKAGLDRQVIAVKNCRTISKRDLVRNDQTPNIEVDPETFAVKVDGVHATCEPIATASMNQRYFFG.

A Urease domain is found at 134–572 (AGIDSHIHLI…ASMNQRYFFG (439 aa)). Residues His139, His141, and Lys222 each coordinate Ni(2+). Residue Lys222 is modified to N6-carboxylysine. Position 224 (His224) interacts with substrate. Ni(2+)-binding residues include His251 and His277. The active-site Proton donor is His325. Asp365 contacts Ni(2+).

The protein belongs to the metallo-dependent hydrolases superfamily. Urease alpha subunit family. As to quaternary structure, heterotrimer of UreA (gamma), UreB (beta) and UreC (alpha) subunits. Three heterotrimers associate to form the active enzyme. Ni cation serves as cofactor. In terms of processing, carboxylation allows a single lysine to coordinate two nickel ions.

The protein resides in the cytoplasm. It catalyses the reaction urea + 2 H2O + H(+) = hydrogencarbonate + 2 NH4(+). It functions in the pathway nitrogen metabolism; urea degradation; CO(2) and NH(3) from urea (urease route): step 1/1. This Yersinia pseudotuberculosis serotype O:1b (strain IP 31758) protein is Urease subunit alpha.